We begin with the raw amino-acid sequence, 428 residues long: tRNA modification GTPase MnmE (428 aa).

(6S)-5-formyl-5,6,7,8-tetrahydrofolate is bound by residues Arg20, Glu77, and Lys117. The region spanning 213–351 (GFEVAIVGSP…LVSRISDTLR (139 aa)) is the TrmE-type G domain. GTP is bound by residues 223–228 (NVGKST), 242–248 (SEYAGTT), and 267–270 (DTAG). 2 residues coordinate Mg(2+): Ser227 and Thr248. Lys428 serves as a coordination point for (6S)-5-formyl-5,6,7,8-tetrahydrofolate.

It belongs to the TRAFAC class TrmE-Era-EngA-EngB-Septin-like GTPase superfamily. TrmE GTPase family. As to quaternary structure, homodimer. Heterotetramer of two MnmE and two MnmG subunits. Requires K(+) as cofactor.

Its subcellular location is the cytoplasm. Its function is as follows. Exhibits a very high intrinsic GTPase hydrolysis rate. Involved in the addition of a carboxymethylaminomethyl (cmnm) group at the wobble position (U34) of certain tRNAs, forming tRNA-cmnm(5)s(2)U34. This Ruegeria sp. (strain TM1040) (Silicibacter sp.) protein is tRNA modification GTPase MnmE.